The primary structure comprises 507 residues: ATP synthase subunit alpha, chloroplastic (507 aa).

170–177 (GDRQTGKT) is an ATP binding site.

The protein belongs to the ATPase alpha/beta chains family. As to quaternary structure, F-type ATPases have 2 components, CF(1) - the catalytic core - and CF(0) - the membrane proton channel. CF(1) has five subunits: alpha(3), beta(3), gamma(1), delta(1), epsilon(1). CF(0) has four main subunits: a, b, b' and c.

The protein localises to the plastid. It is found in the chloroplast thylakoid membrane. It catalyses the reaction ATP + H2O + 4 H(+)(in) = ADP + phosphate + 5 H(+)(out). Functionally, produces ATP from ADP in the presence of a proton gradient across the membrane. The alpha chain is a regulatory subunit. The polypeptide is ATP synthase subunit alpha, chloroplastic (Ceratophyllum demersum (Rigid hornwort)).